Consider the following 397-residue polypeptide: Phosphoglycerate kinase (397 aa).

Substrate contacts are provided by residues aspartate 26 to asparagine 28, arginine 42, histidine 65 to arginine 68, arginine 119, and arginine 152. ATP is bound by residues lysine 203, glutamate 325, and glycine 351–threonine 354.

This sequence belongs to the phosphoglycerate kinase family. As to quaternary structure, monomer.

Its subcellular location is the cytoplasm. The enzyme catalyses (2R)-3-phosphoglycerate + ATP = (2R)-3-phospho-glyceroyl phosphate + ADP. Its pathway is carbohydrate degradation; glycolysis; pyruvate from D-glyceraldehyde 3-phosphate: step 2/5. This chain is Phosphoglycerate kinase, found in Bordetella bronchiseptica (strain ATCC BAA-588 / NCTC 13252 / RB50) (Alcaligenes bronchisepticus).